Here is a 174-residue protein sequence, read N- to C-terminus: Shikimate kinase (174 aa).

Gly10–Ala15 contacts ATP. Thr14 is a Mg(2+) binding site. Substrate contacts are provided by Asp32, Arg56, and Gly78. Arg118 is a binding site for ATP. Substrate is bound at residue Arg137. Arg154 lines the ATP pocket.

The protein belongs to the shikimate kinase family. Monomer. Requires Mg(2+) as cofactor.

The protein resides in the cytoplasm. It carries out the reaction shikimate + ATP = 3-phosphoshikimate + ADP + H(+). It participates in metabolic intermediate biosynthesis; chorismate biosynthesis; chorismate from D-erythrose 4-phosphate and phosphoenolpyruvate: step 5/7. Catalyzes the specific phosphorylation of the 3-hydroxyl group of shikimic acid using ATP as a cosubstrate. This is Shikimate kinase from Symbiobacterium thermophilum (strain DSM 24528 / JCM 14929 / IAM 14863 / T).